Consider the following 99-residue polypeptide: Photosystem II reaction center Psb28 protein (99 aa).

It belongs to the Psb28 family. In terms of assembly, part of the photosystem II complex.

Its subcellular location is the cell inner membrane. The sequence is that of Photosystem II reaction center Psb28 protein from Gloeobacter violaceus (strain ATCC 29082 / PCC 7421).